The chain runs to 1020 residues: Sodium/potassium-transporting ATPase subunit alpha-2 (1020 aa).

A propeptide spanning residues 1 to 5 (MGRGA) is cleaved from the precursor. The disordered stretch occupies residues 1–31 (MGRGAGREYSPAATTAENGGGKKKQKEKELD). Residues 6-85 (GREYSPAATT…NALTPPPTTP (80 aa)) are Cytoplasmic-facing. Ser-10 is subject to Phosphoserine. The segment at 80 to 82 (PPP) is interaction with phosphoinositide-3 kinase. Residues 86–106 (EWVKFCRQLFGGFSILLWIGA) traverse the membrane as a helical segment. Over 107 to 129 (ILCFLAYGIQAAMEDEPSNDNLY) the chain is Extracellular. Residues 130–150 (LGVVLAAVVIVTGCFSYYQEA) form a helical membrane-spanning segment. Residues 151-286 (KSSKIMDSFK…VGRTPIAMEI (136 aa)) are Cytoplasmic-facing. Residues 212–227 (DNSSLTGESEPQTRSP) show a composition bias toward polar residues. A disordered region spans residues 212–231 (DNSSLTGESEPQTRSPEFTH). Residues 287 to 306 (EHFIQLITGVAVFLGVSFFV) traverse the membrane as a helical segment. Over 307–318 (LSLILGYSWLEA) the chain is Extracellular. A helical membrane pass occupies residues 319 to 336 (VIFLIGIIVANVPEGLLA). Residues 337 to 769 (TVTVCLTLTA…EEGRLIFDNL (433 aa)) lie on the Cytoplasmic side of the membrane. The active-site 4-aspartylphosphate intermediate is the Asp-374. Residues Ser-439, Ser-450, Ser-496, and Ser-559 each carry the phosphoserine modification. Thr-570 is modified (phosphothreonine). 2 positions are modified to phosphoserine: Ser-587 and Ser-672. 2 residues coordinate Mg(2+): Asp-714 and Asp-718. The helical transmembrane segment at 770–789 (KKSIAYTLTSNIPEITPFLL) threads the bilayer. At 790–799 (FIIANIPLPL) the chain is on the extracellular side. A helical membrane pass occupies residues 800–820 (GTVTILCIDLGTDMVPAISLA). Residues 821–840 (YEAAESDIMKRQPRNSQTDK) are Cytoplasmic-facing. Ser-826 carries the post-translational modification Phosphoserine. The chain crosses the membrane as a helical span at residues 841–863 (LVNERLISMAYGQIGMIQALGGF). At 864 to 915 (FTYFVILAENGFLPSRLLGIRLDWDDRTMNDLEDSYGQEWTYEQRKVVEFTC) the chain is on the extracellular side. A helical membrane pass occupies residues 916 to 935 (HTAFFASIVVVQWADLIICK). The Cytoplasmic portion of the chain corresponds to 936–948 (TRRNSVFQQGMKN). Position 940 is a phosphoserine; by PKA (Ser-940). Residues 949-967 (KILIFGLLEETALAAFLSY) form a helical membrane-spanning segment. Topologically, residues 968-982 (CPGMGVALRMYPLKV) are extracellular. A helical transmembrane segment spans residues 983–1003 (TWWFCAFPYSLLIFIYDEVRK). Residues 1004-1020 (LILRRYPGGWVEKETYY) are Cytoplasmic-facing.

This sequence belongs to the cation transport ATPase (P-type) (TC 3.A.3) family. Type IIC subfamily. The sodium/potassium-transporting ATPase is composed of a catalytic alpha subunit, an auxiliary non-catalytic beta subunit and an additional regulatory subunit. Interacts with regulatory subunit FXYD1.

The protein localises to the membrane. The protein resides in the cell membrane. It catalyses the reaction K(+)(out) + Na(+)(in) + ATP + H2O = K(+)(in) + Na(+)(out) + ADP + phosphate + H(+). In terms of biological role, this is the catalytic component of the active enzyme, which catalyzes the hydrolysis of ATP coupled with the exchange of sodium and potassium ions across the plasma membrane. This action creates the electrochemical gradient of sodium and potassium, providing the energy for active transport of various nutrients. The protein is Sodium/potassium-transporting ATPase subunit alpha-2 (ATP1A2) of Homo sapiens (Human).